A 216-amino-acid polypeptide reads, in one-letter code: MKINQNTTVDCGNLILVPYQKCHVLKYHNWMKNEELQELTCSEPLTLDEEYQMQASWSTDEDKLTFIVLLNENDEAKKPSILDHVKAHSVESMIGDVNMFLTEEYADGIEEFDDSPSDANATNATKESEVHIVGELELMIAEPQNRRKGYGTKIVDAFLHYVESSGIAKNKQILKYRVKVGSQNKPSIRLFKKLGFSQVKYNAYFDHVELELMRTS.

Positions 68-215 (VLLNENDEAK…DHVELELMRT (148 aa)) constitute an N-acetyltransferase domain.

Belongs to the acetyltransferase family. GNAT subfamily.

Its subcellular location is the cytoplasm. It localises to the nucleus. This is N-acetyltransferase 9-like protein from Schizosaccharomyces pombe (strain 972 / ATCC 24843) (Fission yeast).